Reading from the N-terminus, the 473-residue chain is Bifunctional NAD(P)H-hydrate repair enzyme Nnr (473 aa).

The NAD(P)H-hydrate epimerase stretch occupies residues 1–211 (MRHYYSVDTI…AHTDVLGFEA (211 aa)). The region spanning 10-205 (IRAAEAPLLA…DIGLDLAHTD (196 aa)) is the YjeF N-terminal domain. The NADPHX 1; for epimerase activity stretch occupies residues 62–66 (DNGGD). Residues Asn-63 and Asp-119 each contribute to the K(+) site. Positions 123-129 (GISGSGP) are NADPHX 1; for epimerase activity. Residue Asp-152 participates in (6S)-NADPHX binding. Ser-155 is a K(+) binding site. The region spanning 210–473 (EATDVAARWP…GHIRAALAAL (264 aa)) is the YjeF C-terminal domain. Positions 211–473 (ATDVAARWPV…GHIRAALAAL (263 aa)) are ADP-dependent (S)-NAD(P)H-hydrate dehydratase. Gly-298 is a (6S)-NADPHX binding site. An NADPHX 2; for dehydratase activity region spans residues 348–354 (HAGEFAR). ADP is bound by residues 382 to 386 (KGNVT) and 402 to 411 (QSWAATAGSG). Position 412 (Asp-412) interacts with (6S)-NADPHX.

This sequence in the N-terminal section; belongs to the NnrE/AIBP family. It in the C-terminal section; belongs to the NnrD/CARKD family. Requires K(+) as cofactor.

The catalysed reaction is (6S)-NADHX + ADP = AMP + phosphate + NADH + H(+). It catalyses the reaction (6S)-NADPHX + ADP = AMP + phosphate + NADPH + H(+). It carries out the reaction (6R)-NADHX = (6S)-NADHX. The enzyme catalyses (6R)-NADPHX = (6S)-NADPHX. In terms of biological role, bifunctional enzyme that catalyzes the epimerization of the S- and R-forms of NAD(P)HX and the dehydration of the S-form of NAD(P)HX at the expense of ADP, which is converted to AMP. This allows the repair of both epimers of NAD(P)HX, a damaged form of NAD(P)H that is a result of enzymatic or heat-dependent hydration. In Mycobacterium tuberculosis (strain CDC 1551 / Oshkosh), this protein is Bifunctional NAD(P)H-hydrate repair enzyme Nnr (nnr).